Reading from the N-terminus, the 243-residue chain is Adenosine 5'-phosphosulfate reductase (243 aa).

4 residues coordinate [4Fe-4S] cluster: Cys-126, Cys-127, Cys-209, and Cys-212. Cys-235 (nucleophile; cysteine thiosulfonate intermediate) is an active-site residue.

The protein belongs to the PAPS reductase family. CysH subfamily. [4Fe-4S] cluster serves as cofactor.

The protein localises to the cytoplasm. It catalyses the reaction [thioredoxin]-disulfide + sulfite + AMP + 2 H(+) = adenosine 5'-phosphosulfate + [thioredoxin]-dithiol. The protein operates within sulfur metabolism; hydrogen sulfide biosynthesis; sulfite from sulfate. Functionally, catalyzes the formation of sulfite from adenosine 5'-phosphosulfate (APS) using thioredoxin as an electron donor. The polypeptide is Adenosine 5'-phosphosulfate reductase (Staphylococcus epidermidis (strain ATCC 12228 / FDA PCI 1200)).